The following is a 115-amino-acid chain: Aspartate 1-decarboxylase (115 aa).

Serine 25 acts as the Schiff-base intermediate with substrate; via pyruvic acid in catalysis. A Pyruvic acid (Ser) modification is found at serine 25. Threonine 57 contacts substrate. The active-site Proton donor is tyrosine 58. 71–73 (GAA) serves as a coordination point for substrate.

Belongs to the PanD family. In terms of assembly, heterooctamer of four alpha and four beta subunits. Pyruvate is required as a cofactor. Is synthesized initially as an inactive proenzyme, which is activated by self-cleavage at a specific serine bond to produce a beta-subunit with a hydroxyl group at its C-terminus and an alpha-subunit with a pyruvoyl group at its N-terminus.

It localises to the cytoplasm. The enzyme catalyses L-aspartate + H(+) = beta-alanine + CO2. Its pathway is cofactor biosynthesis; (R)-pantothenate biosynthesis; beta-alanine from L-aspartate: step 1/1. Its function is as follows. Catalyzes the pyruvoyl-dependent decarboxylation of aspartate to produce beta-alanine. This is Aspartate 1-decarboxylase from Campylobacter concisus (strain 13826).